Consider the following 102-residue polypeptide: Small ribosomal subunit protein uS17 (102 aa).

The interval 1-27 (MEQTEEHTDTHTDEQDEAVDRNDRKER) is disordered.

This sequence belongs to the universal ribosomal protein uS17 family. Part of the 30S ribosomal subunit.

Functionally, one of the primary rRNA binding proteins, it binds specifically to the 5'-end of 16S ribosomal RNA. The sequence is that of Small ribosomal subunit protein uS17 from Salinibacter ruber (strain DSM 13855 / M31).